Here is a 239-residue protein sequence, read N- to C-terminus: Serine protease SplF (239 aa).

An N-terminal signal peptide occupies residues 1 to 36 (MNKNIIIKSIAALTILTSITGVGTTVVDGIQQTAKA). Catalysis depends on charge relay system residues histidine 75, aspartate 114, and serine 192.

Belongs to the peptidase S1B family.

The protein resides in the secreted. The polypeptide is Serine protease SplF (splF) (Staphylococcus aureus (strain MSSA476)).